Consider the following 570-residue polypeptide: Nucleoprotein (570 aa).

The binding site for the cap structure m7GTP stretch occupies residues 54-241 (MRKDKRNDSD…IDVSKSSINV (188 aa)). The disordered stretch occupies residues 342-361 (IDLSQNKQMSPAKPKGAGHG). Mn(2+) is bound by residues Asp-390 and Glu-392. Residues Glu-400, Cys-507, His-510, and Cys-530 each contribute to the Zn(2+) site. A Mn(2+)-binding site is contributed by Asp-534.

It belongs to the arenaviridae nucleocapsid protein family. As to quaternary structure, homomultimerizes to form the nucleocapsid. Binds to viral genomic RNA. Interacts with glycoprotein G2. Interacts with protein Z; this interaction probably directs the encapsidated genome to budding sites. Interacts with protein L; this interaction does not interfere with Z-L interaction. Interacts with host IKBKE (via Protein kinase domain); the interaction inhibits IKBKE kinase activity.

The protein resides in the virion. Its subcellular location is the host cytoplasm. Functionally, encapsidates the genome, protecting it from nucleases. The encapsidated genomic RNA is termed the nucleocapsid (NC). Serves as template for viral transcription and replication. The increased presence of protein N in host cell does not seem to trigger the switch from transcription to replication as observed in other negative strain RNA viruses. Through the interaction with host IKBKE, strongly inhibits the phosphorylation and nuclear translocation of host IRF3, a protein involved in interferon activation pathway, leading to the inhibition of interferon-beta and IRF3-dependent promoters activation. Also encodes a functional 3'-5' exoribonuclease that degrades preferentially dsRNA substrates and thereby participates in the suppression of interferon induction. This is Nucleoprotein from Praomys (African soft-furred rats).